Consider the following 158-residue polypeptide: SsrA-binding protein (158 aa).

The tract at residues 134 to 158 is disordered; sequence KLHDKRETEKERDWNRQKSRLLKTG. Residues 137–149 are compositionally biased toward basic and acidic residues; the sequence is DKRETEKERDWNR.

Belongs to the SmpB family.

The protein resides in the cytoplasm. Required for rescue of stalled ribosomes mediated by trans-translation. Binds to transfer-messenger RNA (tmRNA), required for stable association of tmRNA with ribosomes. tmRNA and SmpB together mimic tRNA shape, replacing the anticodon stem-loop with SmpB. tmRNA is encoded by the ssrA gene; the 2 termini fold to resemble tRNA(Ala) and it encodes a 'tag peptide', a short internal open reading frame. During trans-translation Ala-aminoacylated tmRNA acts like a tRNA, entering the A-site of stalled ribosomes, displacing the stalled mRNA. The ribosome then switches to translate the ORF on the tmRNA; the nascent peptide is terminated with the 'tag peptide' encoded by the tmRNA and targeted for degradation. The ribosome is freed to recommence translation, which seems to be the essential function of trans-translation. This is SsrA-binding protein from Allorhizobium ampelinum (strain ATCC BAA-846 / DSM 112012 / S4) (Agrobacterium vitis (strain S4)).